The chain runs to 364 residues: Tyrosine--tRNA ligase (364 aa).

L-tyrosine is bound by residues Y41, Y167, Q171, D174, and Q189. The short motif at 238–242 is the 'KMSKS' region element; sequence KMSKS. K241 provides a ligand contact to ATP.

It belongs to the class-I aminoacyl-tRNA synthetase family. TyrS type 4 subfamily. As to quaternary structure, homodimer.

Its subcellular location is the cytoplasm. It carries out the reaction tRNA(Tyr) + L-tyrosine + ATP = L-tyrosyl-tRNA(Tyr) + AMP + diphosphate + H(+). Functionally, catalyzes the attachment of tyrosine to tRNA(Tyr) in a two-step reaction: tyrosine is first activated by ATP to form Tyr-AMP and then transferred to the acceptor end of tRNA(Tyr). This is Tyrosine--tRNA ligase from Sulfurisphaera tokodaii (strain DSM 16993 / JCM 10545 / NBRC 100140 / 7) (Sulfolobus tokodaii).